Reading from the N-terminus, the 743-residue chain is Isocitrate dehydrogenase [NADP] 2 (743 aa).

NADP(+) contacts are provided by Asn-87 and Ser-89. Ser-134, Asn-137, Arg-141, Arg-147, and Lys-257 together coordinate D-threo-isocitrate. Asn-137 lines the NADP(+) pocket. Asp-352 contacts Mg(2+). Tyr-422 and Arg-549 together coordinate D-threo-isocitrate. 2 residues coordinate Mg(2+): Asp-550 and Asp-554. NADP(+) is bound by residues Ser-587, His-591, Arg-602, Asp-604, and Arg-651.

It belongs to the monomeric-type IDH family. Monomer. The cofactor is Mg(2+). Requires Mn(2+) as cofactor.

The enzyme catalyses D-threo-isocitrate + NADP(+) = 2-oxoglutarate + CO2 + NADPH. In terms of biological role, catalyzes the oxidative decarboxylation of isocitrate to 2-oxoglutarate and carbon dioxide with the concomitant reduction of NADP(+). The protein is Isocitrate dehydrogenase [NADP] 2 (icd2) of Colwellia maris.